The following is a 546-amino-acid chain: Membrane protein insertase YidC (546 aa).

The helical transmembrane segment at 8–28 threads the bilayer; it reads ILLATVLSVGILILWQVIFPT. The segment at 31–70 is disordered; that stretch reads VPPKPAPPPAAEVAKPAAPASPAPGAAAPAVPAPPPDAPE. Residues 41-60 are compositionally biased toward low complexity; it reads AEVAKPAAPASPAPGAAAPA. The next 5 membrane-spanning stretches (helical) occupy residues 326-346, 356-376, 422-442, 459-479, and 498-518; these read IDYG…LYVM, WGVA…PLTY, LGGC…YAAL, LTAH…SFVM, and FFPG…TLYI.

Belongs to the OXA1/ALB3/YidC family. Type 1 subfamily. Interacts with the Sec translocase complex via SecD. Specifically interacts with transmembrane segments of nascent integral membrane proteins during membrane integration.

It is found in the cell inner membrane. In terms of biological role, required for the insertion and/or proper folding and/or complex formation of integral membrane proteins into the membrane. Involved in integration of membrane proteins that insert both dependently and independently of the Sec translocase complex, as well as at least some lipoproteins. Aids folding of multispanning membrane proteins. The protein is Membrane protein insertase YidC of Anaeromyxobacter sp. (strain K).